The sequence spans 240 residues: MAVSFLQSLFSVFRKKSSPQEPATTTAGGPAKRTKLTVGELQEFAPEWIVIGLGNPGAKYADTRHNIGYWPIDRLVERYEAQWLPVEGQKAHAALITVEETPVLLLRSTTYMNNSGEAVGPLASALSLPAERIIVCHDELDIAAGQVRIKDKGGEGGHNGLRSMTAELGTQHYVRVRMGIGRPPKGTSVIDFVLSPFEEADIDAENGWMENTLRDSVDSVTLIVNNGTDIARNDIHTRKH.

TRNA is bound at residue Y60. The active-site Proton acceptor is H65. TRNA is bound by residues Y111, N113, and N159.

Belongs to the PTH family. As to quaternary structure, monomer.

The protein resides in the cytoplasm. It carries out the reaction an N-acyl-L-alpha-aminoacyl-tRNA + H2O = an N-acyl-L-amino acid + a tRNA + H(+). Hydrolyzes ribosome-free peptidyl-tRNAs (with 1 or more amino acids incorporated), which drop off the ribosome during protein synthesis, or as a result of ribosome stalling. Its function is as follows. Catalyzes the release of premature peptidyl moieties from peptidyl-tRNA molecules trapped in stalled 50S ribosomal subunits, and thus maintains levels of free tRNAs and 50S ribosomes. This Corynebacterium jeikeium (strain K411) protein is Peptidyl-tRNA hydrolase 2.